Reading from the N-terminus, the 183-residue chain is Small ribosomal subunit protein uS4c (183 aa).

Residues 82 to 143 (MRLDNILFRL…KQRSKALIQN (62 aa)) enclose the S4 RNA-binding domain.

Belongs to the universal ribosomal protein uS4 family. In terms of assembly, part of the 30S ribosomal subunit. Contacts protein S5. The interaction surface between S4 and S5 is involved in control of translational fidelity.

It localises to the plastid. Its subcellular location is the chloroplast. Functionally, one of the primary rRNA binding proteins, it binds directly to 16S rRNA where it nucleates assembly of the body of the 30S subunit. With S5 and S12 plays an important role in translational accuracy. This is Small ribosomal subunit protein uS4c (rps4) from Crocosmia sp. (strain Porto Alegre 034).